Consider the following 184-residue polypeptide: ATP synthase subunit delta (184 aa).

Belongs to the ATPase delta chain family. In terms of assembly, F-type ATPases have 2 components, F(1) - the catalytic core - and F(0) - the membrane proton channel. F(1) has five subunits: alpha(3), beta(3), gamma(1), delta(1), epsilon(1). F(0) has three main subunits: a(1), b(2) and c(10-14). The alpha and beta chains form an alternating ring which encloses part of the gamma chain. F(1) is attached to F(0) by a central stalk formed by the gamma and epsilon chains, while a peripheral stalk is formed by the delta and b chains.

It is found in the cell inner membrane. Its function is as follows. F(1)F(0) ATP synthase produces ATP from ADP in the presence of a proton or sodium gradient. F-type ATPases consist of two structural domains, F(1) containing the extramembraneous catalytic core and F(0) containing the membrane proton channel, linked together by a central stalk and a peripheral stalk. During catalysis, ATP synthesis in the catalytic domain of F(1) is coupled via a rotary mechanism of the central stalk subunits to proton translocation. In terms of biological role, this protein is part of the stalk that links CF(0) to CF(1). It either transmits conformational changes from CF(0) to CF(1) or is implicated in proton conduction. This is ATP synthase subunit delta from Caulobacter vibrioides (strain NA1000 / CB15N) (Caulobacter crescentus).